The chain runs to 157 residues: F-box protein SNE (157 aa).

Residues proline 24–leucine 70 enclose the F-box domain.

In terms of assembly, part of a SCF (ASK-cullin-F-box) protein ligase complex. Interacts directly with SKP1A and SKP1B. In terms of tissue distribution, highly expressed in flowers and at much lower level in seedlings, rosette leaves and green siliques.

The protein resides in the nucleus. It functions in the pathway protein modification; protein ubiquitination. In terms of biological role, essential component of a SCF-type E3 ligase complex that positively regulates the gibberellin signaling pathway. Upon gibberellin treatment, such complex probably mediates the ubiquitination and subsequent degradation of DELLA proteins (GAI, RGA and RGL2), some repressors of the gibberellin pathway, leading to activate the pathway. Can partially complement the absence of GID2/SLY1. This chain is F-box protein SNE (SNE), found in Arabidopsis thaliana (Mouse-ear cress).